Reading from the N-terminus, the 79-residue chain is Sec-independent protein translocase protein TatA (79 aa).

A helical membrane pass occupies residues 1-21; sequence MGGISIWQLLIVALIVVLLFG. A disordered region spans residues 43–79; sequence MSSEEDKKALEDTEAAKTAQTTQQATEKKPESNKEQA. A compositionally biased stretch (basic and acidic residues) spans 46-57; the sequence is EEDKKALEDTEA. Positions 58-67 are enriched in low complexity; that stretch reads AKTAQTTQQA. Residues 68 to 79 are compositionally biased toward basic and acidic residues; it reads TEKKPESNKEQA.

The protein belongs to the TatA/E family. The Tat system comprises two distinct complexes: a TatABC complex, containing multiple copies of TatA, TatB and TatC subunits, and a separate TatA complex, containing only TatA subunits. Substrates initially bind to the TatABC complex, which probably triggers association of the separate TatA complex to form the active translocon.

Its subcellular location is the cell inner membrane. In terms of biological role, part of the twin-arginine translocation (Tat) system that transports large folded proteins containing a characteristic twin-arginine motif in their signal peptide across membranes. TatA could form the protein-conducting channel of the Tat system. The chain is Sec-independent protein translocase protein TatA from Shewanella baltica (strain OS223).